A 711-amino-acid polypeptide reads, in one-letter code: Ent-copalyl diphosphate synthase 1 (711 aa).

Substrate is bound at residue lysine 145. 2 residues coordinate Mg(2+): aspartate 277 and aspartate 279. Positions 277–280 (DIDD) match the DXDD motif motif. Lysine 364 contributes to the substrate binding site.

Belongs to the terpene synthase family. Tpsc subfamily. The cofactor is Mg(2+).

The enzyme catalyses (2E,6E,10E)-geranylgeranyl diphosphate = ent-copalyl diphosphate. Its pathway is secondary metabolite biosynthesis; terpenoid biosynthesis. In terms of biological role, involved in the biosynthesis of ent-kaurene diterpenoids natural products such as oridonin, miltiradiene, eriocalyxin B and nezukol, known to exhibit antitumor, anti-inflammatory and antibacterial activities. Catalyzes the conversion of (2E,6E,10E)-geranylgeranyl diphosphate (GGPP) to ent-copalyl diphosphate (ent-CPP). This chain is Ent-copalyl diphosphate synthase 1, found in Isodon japonicus (Scutellaria japonica).